Reading from the N-terminus, the 269-residue chain is GTP cyclohydrolase FolE2 2 (269 aa).

The protein belongs to the GTP cyclohydrolase IV family.

It carries out the reaction GTP + H2O = 7,8-dihydroneopterin 3'-triphosphate + formate + H(+). The protein operates within cofactor biosynthesis; 7,8-dihydroneopterin triphosphate biosynthesis; 7,8-dihydroneopterin triphosphate from GTP: step 1/1. In terms of biological role, converts GTP to 7,8-dihydroneopterin triphosphate. The chain is GTP cyclohydrolase FolE2 2 from Burkholderia lata (strain ATCC 17760 / DSM 23089 / LMG 22485 / NCIMB 9086 / R18194 / 383).